A 364-amino-acid chain; its full sequence is N-alpha-acetyltransferase 30 (364 aa).

Positions 1–18 (MAEVPPGPSSLLPPPAPA) are enriched in pro residues. 3 disordered regions span residues 1-21 (MAEV…AAPA), 39-65 (SEDE…TSAK), and 110-164 (EAAA…SDPA). Phosphoserine occurs at positions 39 and 54. Positions 39 to 48 (SEDEEDDEEH) are enriched in acidic residues. A compositionally biased stretch (basic and acidic residues) spans 126 to 135 (AEGHPGERPP). The segment covering 152 to 164 (AAAAAAGAASDPA) has biased composition (low complexity). Phosphoserine is present on residues Ser192, Ser198, and Ser201. The 149-residue stretch at 216 to 364 (RYVRYESELQ…DALRLKLWLR (149 aa)) folds into the N-acetyltransferase domain. Lys235 is modified (N6-acetyllysine).

This sequence belongs to the acetyltransferase family. MAK3 subfamily. As to quaternary structure, component of the N-terminal acetyltransferase C (NatC) complex, which is composed of NAA35, NAA38 and NAA30.

The protein localises to the cytoplasm. Its subcellular location is the nucleus. The enzyme catalyses N-terminal L-methionyl-L-leucyl-[protein] + acetyl-CoA = N-terminal N(alpha)-acetyl-L-methionyl-L-leucyl-[protein] + CoA + H(+). The catalysed reaction is N-terminal L-methionyl-L-isoleucyl-[protein] + acetyl-CoA = N-terminal N(alpha)-acetyl-L-methionyl-L-isoleucyl-[protein] + CoA + H(+). It carries out the reaction N-terminal L-methionyl-L-phenylalanyl-[protein] + acetyl-CoA = N-terminal N(alpha)-acetyl-L-methionyl-L-phenylalanyl-[protein] + CoA + H(+). It catalyses the reaction N-terminal L-methionyl-L-tryptophyl-[protein] + acetyl-CoA = N-terminal N(alpha)-acetyl-L-methionyl-L-tryptophyl-[protein] + CoA + H(+). The enzyme catalyses N-terminal L-methionyl-L-tyrosyl-[protein] + acetyl-CoA = N-terminal N(alpha)-acetyl-L-methionyl-L-tyrosyl-[protein] + CoA + H(+). Its function is as follows. Catalytic subunit of the N-terminal acetyltransferase C (NatC) complex. Catalyzes acetylation of the N-terminal methionine residues of peptides beginning with Met-Leu-Ala and Met-Leu-Gly. N-terminal acetylation protects proteins from ubiquitination and degradation by the N-end rule pathway. Necessary for the lysosomal localization and function of ARL8B sugeesting that ARL8B is a NatC substrate. This chain is N-alpha-acetyltransferase 30 (Naa30), found in Mus musculus (Mouse).